The sequence spans 402 residues: 4-hydroxy-3-methylbut-2-enyl diphosphate reductase (402 aa).

Cys-66 serves as a coordination point for [4Fe-4S] cluster. His-96 is a (2E)-4-hydroxy-3-methylbut-2-enyl diphosphate binding site. His-96 is a dimethylallyl diphosphate binding site. His-96 serves as a coordination point for isopentenyl diphosphate. Cys-157 contributes to the [4Fe-4S] cluster binding site. His-185 provides a ligand contact to (2E)-4-hydroxy-3-methylbut-2-enyl diphosphate. His-185 contacts dimethylallyl diphosphate. Residue His-185 participates in isopentenyl diphosphate binding. Glu-187 serves as the catalytic Proton donor. Thr-250 serves as a coordination point for (2E)-4-hydroxy-3-methylbut-2-enyl diphosphate. Cys-288 serves as a coordination point for [4Fe-4S] cluster. The (2E)-4-hydroxy-3-methylbut-2-enyl diphosphate site is built by Ser-317, Ser-318, Asn-319, and Ser-379. Positions 317, 318, 319, and 379 each coordinate dimethylallyl diphosphate. Ser-317, Ser-318, Asn-319, and Ser-379 together coordinate isopentenyl diphosphate.

This sequence belongs to the IspH family. It depends on [4Fe-4S] cluster as a cofactor.

The enzyme catalyses isopentenyl diphosphate + 2 oxidized [2Fe-2S]-[ferredoxin] + H2O = (2E)-4-hydroxy-3-methylbut-2-enyl diphosphate + 2 reduced [2Fe-2S]-[ferredoxin] + 2 H(+). It catalyses the reaction dimethylallyl diphosphate + 2 oxidized [2Fe-2S]-[ferredoxin] + H2O = (2E)-4-hydroxy-3-methylbut-2-enyl diphosphate + 2 reduced [2Fe-2S]-[ferredoxin] + 2 H(+). Its pathway is isoprenoid biosynthesis; dimethylallyl diphosphate biosynthesis; dimethylallyl diphosphate from (2E)-4-hydroxy-3-methylbutenyl diphosphate: step 1/1. The protein operates within isoprenoid biosynthesis; isopentenyl diphosphate biosynthesis via DXP pathway; isopentenyl diphosphate from 1-deoxy-D-xylulose 5-phosphate: step 6/6. Functionally, catalyzes the conversion of 1-hydroxy-2-methyl-2-(E)-butenyl 4-diphosphate (HMBPP) into a mixture of isopentenyl diphosphate (IPP) and dimethylallyl diphosphate (DMAPP). Acts in the terminal step of the DOXP/MEP pathway for isoprenoid precursor biosynthesis. The chain is 4-hydroxy-3-methylbut-2-enyl diphosphate reductase from Nostoc punctiforme (strain ATCC 29133 / PCC 73102).